Reading from the N-terminus, the 63-residue chain is Cytochrome c oxidase subunit 7C, mitochondrial (63 aa).

The N-terminal 16 residues, 1 to 16, are a transit peptide targeting the mitochondrion; sequence MLGQSIRRFTTSVVRR. Over 17-34 the chain is Mitochondrial matrix; that stretch reads SHYEEGPGKNLPFSVENK. N6-acetyllysine; alternate is present on Lys25. Lys25 carries the N6-succinyllysine; alternate modification. Residues 35-57 form a helical membrane-spanning segment; it reads WRLLAMMTVYFGSGFAAPFFIVR. Over 58 to 63 the chain is Mitochondrial intermembrane; it reads HQLLKK.

The protein belongs to the cytochrome c oxidase VIIc family. As to quaternary structure, component of the cytochrome c oxidase (complex IV, CIV), a multisubunit enzyme composed of 14 subunits. The complex is composed of a catalytic core of 3 subunits MT-CO1, MT-CO2 and MT-CO3, encoded in the mitochondrial DNA, and 11 supernumerary subunits COX4I, COX5A, COX5B, COX6A, COX6B, COX6C, COX7A, COX7B, COX7C, COX8 and NDUFA4, which are encoded in the nuclear genome. The complex exists as a monomer or a dimer and forms supercomplexes (SCs) in the inner mitochondrial membrane with NADH-ubiquinone oxidoreductase (complex I, CI) and ubiquinol-cytochrome c oxidoreductase (cytochrome b-c1 complex, complex III, CIII), resulting in different assemblies (supercomplex SCI(1)III(2)IV(1) and megacomplex MCI(2)III(2)IV(2)). Interacts with RAB5IF.

It is found in the mitochondrion inner membrane. Its pathway is energy metabolism; oxidative phosphorylation. Component of the cytochrome c oxidase, the last enzyme in the mitochondrial electron transport chain which drives oxidative phosphorylation. The respiratory chain contains 3 multisubunit complexes succinate dehydrogenase (complex II, CII), ubiquinol-cytochrome c oxidoreductase (cytochrome b-c1 complex, complex III, CIII) and cytochrome c oxidase (complex IV, CIV), that cooperate to transfer electrons derived from NADH and succinate to molecular oxygen, creating an electrochemical gradient over the inner membrane that drives transmembrane transport and the ATP synthase. Cytochrome c oxidase is the component of the respiratory chain that catalyzes the reduction of oxygen to water. Electrons originating from reduced cytochrome c in the intermembrane space (IMS) are transferred via the dinuclear copper A center (CU(A)) of subunit 2 and heme A of subunit 1 to the active site in subunit 1, a binuclear center (BNC) formed by heme A3 and copper B (CU(B)). The BNC reduces molecular oxygen to 2 water molecules using 4 electrons from cytochrome c in the IMS and 4 protons from the mitochondrial matrix. This Mus musculus (Mouse) protein is Cytochrome c oxidase subunit 7C, mitochondrial (Cox7c).